The sequence spans 175 residues: Translation initiation factor IF-3 (175 aa).

Belongs to the IF-3 family. As to quaternary structure, monomer.

The protein resides in the cytoplasm. Its function is as follows. IF-3 binds to the 30S ribosomal subunit and shifts the equilibrium between 70S ribosomes and their 50S and 30S subunits in favor of the free subunits, thus enhancing the availability of 30S subunits on which protein synthesis initiation begins. This is Translation initiation factor IF-3 from Staphylococcus saprophyticus subsp. saprophyticus (strain ATCC 15305 / DSM 20229 / NCIMB 8711 / NCTC 7292 / S-41).